A 286-amino-acid chain; its full sequence is Elongation factor Ts (286 aa).

Residues 82–85 (TDFV) are involved in Mg(2+) ion dislocation from EF-Tu.

This sequence belongs to the EF-Ts family.

The protein localises to the cytoplasm. Functionally, associates with the EF-Tu.GDP complex and induces the exchange of GDP to GTP. It remains bound to the aminoacyl-tRNA.EF-Tu.GTP complex up to the GTP hydrolysis stage on the ribosome. The chain is Elongation factor Ts from Desulfovibrio desulfuricans (strain ATCC 27774 / DSM 6949 / MB).